The primary structure comprises 644 residues: Protein ETHYLENE-INSENSITIVE 3-like 1b (644 aa).

Disordered regions lie at residues 47-75 and 97-131; these read QCVM…DDDV and ELQL…KMSR. The span at 66–75 shows a compositional bias: acidic residues; the sequence is AGEDDSDDDV.

The protein belongs to the EIN3 family. In terms of tissue distribution, highly expressed in roots. Expressed at low levels in leaves and panicles.

It is found in the nucleus. Its function is as follows. Transcription factor acting as a positive regulator in the ethylene response pathway. Involved in wound signaling by binding specifically to the DNA sequence 5'-ATGTACCT-3' found in the promoter of some wound-inducible genes. Binds directly to the DNA sequence 5'-TGTTACAAATACC-3' in the promoter of the GA20OX2 gene to activate its expression at the transcriptional level during ethylene signaling. In Oryza sativa subsp. japonica (Rice), this protein is Protein ETHYLENE-INSENSITIVE 3-like 1b.